The primary structure comprises 447 residues: MSTMTPAEIVSELDKHIIGQNRAKKAVAVALRNRWRRQQVDEPLRQEITPKNILMIGPTGVGKTEIARRLAKLADAPFIKIEATKFTEVGYVGRDVDSIVRDLIEISVKQTRETEMRKMRTKAEDLAEDRILDILLPGARTVGFGSGTSEASGDESNTTRQTFRKRLREGALDDKEIELDIEMQAPAMDIMGPPGMEDMTEQIRSMFANLGGGKKTRRKVKVKEALKLLTDEEASKMLNDEEVKTKAVQNVEQNGIVFLDEIDKIASRSEAGGGEVSRQGVQRDLLPLVEGTTINTKYGMVKTDHILFIASGAFHLAKPSDLIPELQGRFPIRVELDSLSVKDFESILVATDASLVKQYQALLATEDVHLEFADDGIRRLAEIAFSVNEKTENIGARRLYTVIEKLLEEVSFSAGNHTGKSVLIDAAYVDRALNDVAQDEDLSRYVL.

Residues Ile18, 60-65 (GVGKTE), Asp260, Glu325, and Arg397 each bind ATP.

The protein belongs to the ClpX chaperone family. HslU subfamily. A double ring-shaped homohexamer of HslV is capped on each side by a ring-shaped HslU homohexamer. The assembly of the HslU/HslV complex is dependent on binding of ATP.

Its subcellular location is the cytoplasm. Functionally, ATPase subunit of a proteasome-like degradation complex; this subunit has chaperone activity. The binding of ATP and its subsequent hydrolysis by HslU are essential for unfolding of protein substrates subsequently hydrolyzed by HslV. HslU recognizes the N-terminal part of its protein substrates and unfolds these before they are guided to HslV for hydrolysis. This is ATP-dependent protease ATPase subunit HslU from Paraburkholderia phymatum (strain DSM 17167 / CIP 108236 / LMG 21445 / STM815) (Burkholderia phymatum).